A 194-amino-acid polypeptide reads, in one-letter code: uncharacterized protein (194 aa).

The protein belongs to the mimivirus R457/R459 family.

The protein localises to the virion. This is an uncharacterized protein from Acanthamoeba polyphaga mimivirus (APMV).